Reading from the N-terminus, the 585-residue chain is Proline--tRNA ligase (585 aa).

The protein belongs to the class-II aminoacyl-tRNA synthetase family. ProS type 1 subfamily. In terms of assembly, homodimer.

Its subcellular location is the cytoplasm. The enzyme catalyses tRNA(Pro) + L-proline + ATP = L-prolyl-tRNA(Pro) + AMP + diphosphate. In terms of biological role, catalyzes the attachment of proline to tRNA(Pro) in a two-step reaction: proline is first activated by ATP to form Pro-AMP and then transferred to the acceptor end of tRNA(Pro). As ProRS can inadvertently accommodate and process non-cognate amino acids such as alanine and cysteine, to avoid such errors it has two additional distinct editing activities against alanine. One activity is designated as 'pretransfer' editing and involves the tRNA(Pro)-independent hydrolysis of activated Ala-AMP. The other activity is designated 'posttransfer' editing and involves deacylation of mischarged Ala-tRNA(Pro). The misacylated Cys-tRNA(Pro) is not edited by ProRS. This chain is Proline--tRNA ligase, found in Nocardia farcinica (strain IFM 10152).